Here is a 349-residue protein sequence, read N- to C-terminus: tRNA pseudouridine synthase D (349 aa).

Phe27 provides a ligand contact to substrate. Asp80 (nucleophile) is an active-site residue. Asn129 contacts substrate. Residues 155–303 (GVPNYFGAQR…VEAARRAMLL (149 aa)) form the TRUD domain. Phe329 serves as a coordination point for substrate.

It belongs to the pseudouridine synthase TruD family.

The catalysed reaction is uridine(13) in tRNA = pseudouridine(13) in tRNA. Responsible for synthesis of pseudouridine from uracil-13 in transfer RNAs. The sequence is that of tRNA pseudouridine synthase D from Escherichia coli O127:H6 (strain E2348/69 / EPEC).